The sequence spans 317 residues: MATRHRRRGGSAPSWAKPGKPGERPGGPKKSRGRTSWKSLLIWGVFGVTLGLMAGYYLWGELITDDSVTEVLAAQRDAVAQRFFHVPCSQDYESLKQFEACTPRKCGRAVTDSVITLQEAEKMRRLAEAGLSLGGSDGGASILDLHSGALSMGKKFVNMYRFFGDKLKDVMSDEDFNLYREVRLKIQHEIARTFNISVSSLHLTKPTFFSRMNSSEAKTAHDEYWHPHIDKVTYGSFDYTSLLYLSDYSQDFGGGRFVFIDEGANRTVEPRTGRLSFFTSGSENLHRVEKVSWGTRYAITISFTCNPEHAIGDPTWT.

The disordered stretch occupies residues M1–R34. Topologically, residues M1 to S39 are cytoplasmic. The chain crosses the membrane as a helical; Signal-anchor for type II membrane protein span at residues L40 to G60. Over E61–T317 the chain is Lumenal. 2 N-linked (GlcNAc...) asparagine glycosylation sites follow: N195 and N213. Residues K205–P307 form the Fe2OG dioxygenase domain. Residues H228 and D230 each contribute to the Fe cation site. N265 carries N-linked (GlcNAc...) asparagine glycosylation. H286 provides a ligand contact to Fe cation. Residue R296 is part of the active site. R296 contributes to the 2-oxoglutarate binding site.

Belongs to the OGFOD3 family. It depends on Fe(2+) as a cofactor. The cofactor is L-ascorbate.

Its subcellular location is the membrane. The polypeptide is 2-oxoglutarate and iron-dependent oxygenase domain-containing protein 3 (ogfod3) (Xenopus tropicalis (Western clawed frog)).